Here is a 335-residue protein sequence, read N- to C-terminus: MNPLDLIAKRAYPYETEKRDKTYLALNENPFPFPEDLVDEVFRRLNSDALRIYYDSPDEELIEKILSYLDTDFLSKNNVSVGNGADEIIYVMMLMFDRSVFFPPTYSCYRIFAKAVGAKFLEVPLTKDLRIPEVNVGEGDVVFIPNPNNPTGHVFEREEIERILKTGAFVALDEAYYEFHGESYVDLLKKYENLAVIRTFSKAFSLAAQRVGYVVASEKFIDAYNRVRLPFNVSYVSQMFAKVALDHREIFEERTKFIVEERERMKSALREMGYRITDSRGNFVFVFMEKEEKERLLEHLRTKNVAVRSFREGVRITIGKREENDMILRELEVFK.

Lys-202 carries the post-translational modification N6-(pyridoxal phosphate)lysine.

It belongs to the class-II pyridoxal-phosphate-dependent aminotransferase family. Histidinol-phosphate aminotransferase subfamily. In terms of assembly, homodimer. Pyridoxal 5'-phosphate is required as a cofactor.

The enzyme catalyses L-histidinol phosphate + 2-oxoglutarate = 3-(imidazol-4-yl)-2-oxopropyl phosphate + L-glutamate. The protein operates within amino-acid biosynthesis; L-histidine biosynthesis; L-histidine from 5-phospho-alpha-D-ribose 1-diphosphate: step 7/9. This Thermotoga sp. (strain RQ2) protein is Histidinol-phosphate aminotransferase.